A 405-amino-acid chain; its full sequence is MERQISYRSLSKIPGLFSLLLAATLSRLAGRMFVLTLVLFALARFSSPVLAGWLTFAAIVPGLIVSPLAGVLLDCVGPTIAVRIDMIASTAFITAISLAGWLGWSSPPVVCTLAMLFSLAGPLGIAGIRTLLPRLVPPHALDQANALDTAVYSIVDVVGPAMAGGLVGWLGPEAAMSLIAAACAGAAVCLSQVQRLPGLASSRTSLLRQAIKGIYVVVRQPTLRGLAVSQSLYQMTWGALHVVIPVFVAGNYTVAAGSTVVGLLWALVGIAGGVGALLAGHLCTTGRERHIMTAGMAVTAFATWPIAAEFGFRGLTIGLLLAGAMSGPIDVAMLTLRQRRTNPRQLGRVMSISISVNQAGFPLGAAIAGVVITESLSAIFVLAGITSVLAAIATLSIPPDATPVA.

Helical transmembrane passes span 32–52 (MFVL…VLAG), 53–73 (WLTF…GVLL), 84–104 (IDMI…WLGW), 108–128 (PVVC…IAGI), 150–170 (AVYS…VGWL), 171–191 (GPEA…VCLS), 237–257 (WGAL…VAAG), 260–280 (VVGL…LLAG), 291–311 (IMTA…AEFG), 314–334 (GLTI…VAML), 352–372 (ISIS…GVVI), and 378–398 (AIFV…LSIP).

This sequence belongs to the major facilitator superfamily.

The protein localises to the cell membrane. This is an uncharacterized protein from Sinorhizobium fredii (strain NBRC 101917 / NGR234).